The sequence spans 55 residues: ATP synthase protein 8 (55 aa).

The chain crosses the membrane as a helical span at residues 11–31; that stretch reads LIMFSVTLMLLIVLVINHFML.

This sequence belongs to the ATPase protein 8 family. As to quaternary structure, F-type ATPases have 2 components, CF(1) - the catalytic core - and CF(0) - the membrane proton channel.

It is found in the mitochondrion membrane. Its function is as follows. Mitochondrial membrane ATP synthase (F(1)F(0) ATP synthase or Complex V) produces ATP from ADP in the presence of a proton gradient across the membrane which is generated by electron transport complexes of the respiratory chain. F-type ATPases consist of two structural domains, F(1) - containing the extramembraneous catalytic core and F(0) - containing the membrane proton channel, linked together by a central stalk and a peripheral stalk. During catalysis, ATP synthesis in the catalytic domain of F(1) is coupled via a rotary mechanism of the central stalk subunits to proton translocation. Part of the complex F(0) domain. Minor subunit located with subunit a in the membrane. The polypeptide is ATP synthase protein 8 (MT-ATP8) (Albinaria caerulea (Land snail)).